We begin with the raw amino-acid sequence, 201 residues long: Small ribosomal subunit protein uS4c (201 aa).

Positions 15-45 (LGDLPGLSRKAIKRSYPPGEHGQKSRKPSEY) are disordered. Over residues 35-45 (HGQKSRKPSEY) the composition is skewed to basic and acidic residues. In terms of domain architecture, S4 RNA-binding spans 90–153 (MRLDNTVFRL…ASRKLVENYL (64 aa)).

This sequence belongs to the universal ribosomal protein uS4 family. As to quaternary structure, part of the 30S ribosomal subunit. Contacts protein S5. The interaction surface between S4 and S5 is involved in control of translational fidelity.

It is found in the plastid. It localises to the chloroplast. In terms of biological role, one of the primary rRNA binding proteins, it binds directly to 16S rRNA where it nucleates assembly of the body of the 30S subunit. With S5 and S12 plays an important role in translational accuracy. The polypeptide is Small ribosomal subunit protein uS4c (rps4) (Pyropia yezoensis (Susabi-nori)).